The primary structure comprises 472 residues: Zinc finger imprinted 3 (472 aa).

Residues 8–80 (VTFEDVTVNF…EEEVLGSGRA (73 aa)) enclose the KRAB domain. 11 C2H2-type zinc fingers span residues 167–189 (LKCNACRKLFSSKSRLQSHLRRH), 195–217 (FECHSCGRAFGEKWKLDKHQKTH), 223–245 (YKCENCGNAYKQKSNLFQHQKMH), 251–273 (YQCKTCGKAFSWKSSCINHEKIH), 279–301 (YQCNECEKSFRQNSTLIQHKKVH), 307–329 (FQCTDCGKAFIYKSDLVKHQRIH), 335–357 (YKCSICEKAFSQKSNVIDHEKIH), 363–385 (YECDLCGNTFIQKKNLIQHKKIH), 391–413 (YECNRCGKAFFQKSNLHSHQKTH), 419–441 (YRCSECGKTFIRKLNLSLHKKTH), and 447–470 (YGCSECGKAFADRSYLVRHQKRIH).

The protein belongs to the krueppel C2H2-type zinc-finger protein family.

The protein localises to the nucleus. Functionally, may be involved in transcriptional regulation. In Homo sapiens (Human), this protein is Zinc finger imprinted 3 (ZIM3).